A 159-amino-acid chain; its full sequence is Transmembrane protein 88 (159 aa).

The next 2 helical transmembrane spans lie at 43–63 and 88–108; these read LLLL…MLGF and FTAL…LALA. The interval 137–159 is disordered; it reads PQPRQIRASPGSQAVPTSGKVWV.

This sequence belongs to the TMEM88 family. Interacts (via C-terminus) with DVL1.

It localises to the cell membrane. In terms of biological role, inhibits the Wnt/beta-catenin signaling pathway. Crucial for heart development and acts downstream of GATA factors in the pre-cardiac mesoderm to specify lineage commitment of cardiomyocyte development. The protein is Transmembrane protein 88 (TMEM88) of Homo sapiens (Human).